Here is a 2531-residue protein sequence, read N- to C-terminus: Neurogenic locus notch homolog protein 1 (2531 aa).

The first 18 residues, 1 to 18 (MPRLLTPLLCLTLLPALA), serve as a signal peptide directing secretion. The Extracellular segment spans residues 19–1725 (ARGLRCSQPS…VEPPLPSQLH (1707 aa)). 4 EGF-like domains span residues 20–58 (RGLR…QRCQ), 59–99 (DSNP…PLCL), 102–139 (LDNA…KSCQ), and 140–176 (QADP…PTCR). Cystine bridges form between Cys24–Cys37, Cys31–Cys46, Cys63–Cys74, Cys68–Cys87, Cys89–Cys98, Cys106–Cys117, Cys111–Cys127, Cys129–Cys138, Cys144–Cys155, Cys149–Cys164, Cys166–Cys175, Cys182–Cys195, Cys189–Cys204, Cys206–Cys215, Cys222–Cys233, Cys227–Cys243, Cys245–Cys254, Cys261–Cys272, Cys266–Cys281, Cys283–Cys292, Cys299–Cys312, Cys306–Cys321, Cys323–Cys332, Cys339–Cys350, Cys344–Cys359, Cys361–Cys370, Cys376–Cys387, Cys381–Cys398, Cys400–Cys409, Cys416–Cys429, Cys423–Cys438, and Cys440–Cys449. Residue Ser65 is glycosylated (O-linked (Glc...) serine). Thr73 is a glycosylation site (O-linked (Fuc...) threonine). Residue Thr116 is glycosylated (O-linked (Fuc...) threonine). O-linked (Glc...) serine glycosylation occurs at Ser146. The EGF-like 5; calcium-binding domain occupies 178–216 (DVNECSQNPGLCRHGGTCHNEIGSYRCACRATHTGPHCE). O-linked (Fuc...) threonine glycosylation is present at Thr194. The EGF-like 6 domain maps to 218–255 (PYVPCSPSPCQNGGTCRPTGDTTHECACLPGFAGQNCE). A glycan (O-linked (Fuc...) threonine; alternate) is linked at Thr232. An O-linked (GalNAc...) threonine; alternate glycan is attached at Thr232. In terms of domain architecture, EGF-like 7; calcium-binding spans 257-293 (NVDDCPGNNCKNGGACVDGVNTYNCRCPPEWTGQYCT). The 39-residue stretch at 295-333 (DVDECQLMPNACQNGGTCHNTHGGYNCVCVNGWTGEDCS) folds into the EGF-like 8; calcium-binding domain. Thr311 carries an O-linked (Fuc...) threonine glycan. Residues 335-371 (NIDDCASAACFQGATCHDRVASFYCECPHGRTGLLCH) enclose the EGF-like 9; calcium-binding domain. Residue Ser341 is glycosylated (O-linked (Glc...) serine). Thr349 carries O-linked (Fuc...) threonine glycosylation. The region spanning 372–410 (LNDACISNPCNEGSNCDTNPVNGKAICTCPSGYTGPACS) is the EGF-like 10; calcium-binding domain. Ser378 carries an O-linked (Glc...) serine glycan. The region spanning 412–450 (DVDECALGANPCEHAGKCLNTLGSFECQCLQGYTGPRCE) is the EGF-like 11; calcium-binding domain. Residues 420–421 (AN) form an interaction with DLL4 region. Positions 432 and 435 each coordinate Ca(2+). Ser435 is a glycosylation site (O-linked (Glc...) serine). An interaction with DLL4 region spans residues 448-452 (RCEID). Ca(2+) contacts are provided by Asp452, Val453, and Glu455. The region spanning 452 to 488 (DVNECISNPCQNDATCLDQIGEFQCICMPGYEGVYCE) is the EGF-like 12; calcium-binding domain. 3 disulfides stabilise this stretch: Cys456/Cys467, Cys461/Cys476, and Cys478/Cys487. An O-linked (Glc...) serine glycan is attached at Ser458. Thr466 carries an O-linked (Fuc...) threonine glycan. Asp469 and Gln470 together coordinate Ca(2+). 3 residues coordinate Ca(2+): Asn490, Thr491, and Glu493. In terms of domain architecture, EGF-like 13; calcium-binding spans 490 to 526 (NTDECASSPCLHNGHCMDKINEFQCQCPKGFNGHLCQ). 75 cysteine pairs are disulfide-bonded: Cys494–Cys505, Cys499–Cys514, Cys516–Cys525, Cys532–Cys543, Cys537–Cys552, Cys554–Cys563, Cys570–Cys580, Cys575–Cys589, Cys591–Cys600, Cys607–Cys618, Cys612–Cys627, Cys629–Cys638, Cys645–Cys655, Cys650–Cys664, Cys666–Cys675, Cys682–Cys693, Cys687–Cys702, Cys704–Cys713, Cys720–Cys730, Cys725–Cys739, Cys741–Cys750, Cys757–Cys768, Cys762–Cys777, Cys779–Cys788, Cys795–Cys806, Cys800–Cys815, Cys817–Cys826, Cys833–Cys844, Cys838–Cys855, Cys857–Cys866, Cys873–Cys884, Cys878–Cys893, Cys895–Cys904, Cys911–Cys922, Cys916–Cys931, Cys933–Cys942, Cys949–Cys960, Cys954–Cys969, Cys971–Cys980, Cys987–Cys998, Cys992–Cys1007, Cys1009–Cys1018, Cys1025–Cys1036, Cys1030–Cys1045, Cys1047–Cys1056, Cys1063–Cys1074, Cys1068–Cys1083, Cys1085–Cys1094, Cys1101–Cys1122, Cys1116–Cys1131, Cys1133–Cys1142, Cys1149–Cys1160, Cys1154–Cys1169, Cys1171–Cys1180, Cys1187–Cys1198, Cys1192–Cys1207, Cys1209–Cys1218, Cys1225–Cys1244, Cys1238–Cys1253, Cys1255–Cys1264, Cys1271–Cys1284, Cys1276–Cys1293, Cys1295–Cys1304, Cys1311–Cys1322, Cys1316–Cys1334, Cys1336–Cys1345, Cys1352–Cys1363, Cys1357–Cys1372, Cys1374–Cys1383, Cys1391–Cys1403, Cys1397–Cys1414, Cys1416–Cys1425, Cys1449–Cys1472, Cys1454–Cys1467, and Cys1463–Cys1479. O-linked (Glc...) serine glycosylation occurs at Ser496. The Ca(2+) site is built by Asp507 and Lys508. In terms of domain architecture, EGF-like 14; calcium-binding spans 528–564 (DVDECASTPCKNGAKCLDGPNTYTCVCTEGYTGTHCE). An O-linked (Glc...) serine glycan is attached at Ser534. An EGF-like 15; calcium-binding domain is found at 566–601 (DIDECDPDPCHYGSCKDGVATFTCLCQPGYTGHHCE). An EGF-like 16; calcium-binding domain is found at 603–639 (NINECHSQPCRHGGTCQDRDNSYLCLCLKGTTGPNCE). A glycan (O-linked (Glc...) serine) is linked at Ser609. O-linked (Fuc...) threonine glycosylation occurs at Thr617. The region spanning 641 to 676 (NLDDCASNPCDSGTCLDKIDGYECACEPGYTGSMCN) is the EGF-like 17; calcium-binding domain. O-linked (Glc...) serine glycosylation is present at Ser647. The region spanning 678–714 (NIDECAGSPCHNGGTCEDGIAGFTCRCPEGYHDPTCL) is the EGF-like 18; calcium-binding domain. A glycan (O-linked (Fuc...) threonine) is linked at Thr692. In terms of domain architecture, EGF-like 19; calcium-binding spans 716–751 (EVNECNSNPCIHGACRDGLNGYKCDCAPGWSGTNCD). Ser722 carries an O-linked (Glc...) serine glycan. Positions 753-789 (NNNECESNPCVNGGTCKDMTSGYVCTCREGFSGPNCQ) constitute an EGF-like 20; calcium-binding domain. Ser759 carries O-linked (Glc...) serine glycosylation. O-linked (Fuc...) threonine glycosylation occurs at Thr767. Residue Ser784 is glycosylated (O-linked (GlcNAc) serine). Residues 791-827 (NINECASNPCLNQGTCIDDVAGYKCNCPLPYTGATCE) form the EGF-like 21; calcium-binding domain. Residue Ser797 is glycosylated (O-linked (Glc...) serine). O-linked (Fuc...) threonine glycosylation is present at Thr805. In terms of domain architecture, EGF-like 22 spans 829–867 (VLAPCATSPCKNSGVCKESEDYESFSCVCPTGWQGQTCE). Residues 869–905 (DINECVKSPCRHGASCQNTNGSYRCLCQAGYTGRNCE) form the EGF-like 23; calcium-binding domain. N-linked (GlcNAc...) asparagine glycosylation occurs at Asn888. Thr900 carries an O-linked (GlcNAc) threonine glycan. Positions 907–943 (DIDDCRPNPCHNGGSCTDGINTAFCDCLPGFQGAFCE) constitute an EGF-like 24 domain. The O-linked (Fuc) serine glycan is linked to Ser921. Residues 945–981 (DINECASNPCQNGANCTDCVDSYTCTCPVGFNGIHCE) form the EGF-like 25; calcium-binding domain. O-linked (Glc...) serine glycosylation occurs at Ser951. The N-linked (GlcNAc...) asparagine glycan is linked to Asn959. The EGF-like 26 domain occupies 983-1019 (NTPDCTESSCFNGGTCVDGINSFTCLCPPGFTGSYCQ). Thr997 carries an O-linked (Fuc...) threonine glycan. The region spanning 1021–1057 (DVNECDSRPCLHGGTCQDSYGTYKCTCPQGYTGLNCQ) is the EGF-like 27; calcium-binding domain. An O-linked (Glc...) serine glycan is attached at Ser1027. Thr1035 is a glycosylation site (O-linked (Fuc...) threonine). EGF-like domains follow at residues 1059 to 1095 (LVRW…VNCD) and 1097 to 1143 (LSVS…SYCE). Ser1065 carries O-linked (Glc...) serine glycosylation. The EGF-like 30; calcium-binding domain maps to 1145–1181 (EVDECSPNPCQNGATCTDYLGGFSCKCVAGYHGSNCS). O-linked (Fuc...) threonine glycosylation is present at Thr1159. Asn1179 carries an N-linked (GlcNAc...) asparagine glycan. The 37-residue stretch at 1183-1219 (EINECLSQPCQNGGTCIDLTNSYKCSCPRGTQGVHCE) folds into the EGF-like 31; calcium-binding domain. The O-linked (Glc...) serine glycan is linked to Ser1189. Thr1197 is a glycosylation site (O-linked (Fuc...) threonine). Residues 1221 to 1265 (NVDDCHPPLDPASRSPKCFNNGTCVDQVGGYTCTCPPGFVGERCE) enclose the EGF-like 32; calcium-binding domain. Asn1241 carries an N-linked (GlcNAc...) asparagine glycan. 4 EGF-like domains span residues 1267–1305 (DVNE…RRCE), 1307–1346 (VING…ATCE), 1348–1384 (DART…PECQ), and 1387–1426 (ASSP…LLCH). Ser1273 carries O-linked (Glc...) serine glycosylation. Residue Thr1362 is glycosylated (O-linked (Fuc...) threonine). Residue Thr1379 is glycosylated (O-linked (GlcNAc...) threonine). The O-linked (Fuc...) threonine; alternate glycan is linked to Thr1402. A glycan (O-linked (GalNAc...) threonine; alternate) is linked at Thr1402. 3 LNR repeats span residues 1449-1489 (CELP…PWKN), 1490-1531 (CTQS…CNPL), and 1532-1571 (YDQY…RLAA). Ca(2+)-binding residues include Asp1457, Asn1460, Asp1475, and Asp1478. Residue Asn1489 is glycosylated (N-linked (GlcNAc...) asparagine). Cystine bridges form between Cys1490–Cys1514, Cys1496–Cys1509, Cys1505–Cys1521, Cys1536–Cys1549, and Cys1545–Cys1561. N-linked (GlcNAc...) asparagine glycosylation is present at Asn1587. Positions 1718 to 1750 (PPLPSQLHLMYVAAAAFVLLFFVGCGVLLSRKR) are interaction with PSEN1. Residues 1726–1746 (LMYVAAAAFVLLFFVGCGVLL) form a helical membrane-spanning segment. Residues 1747–2531 (SRKRRRQHGQ…QITHIPEAFK (785 aa)) lie on the Cytoplasmic side of the membrane. A Glycyl lysine isopeptide (Lys-Gly) (interchain with G-Cter in ubiquitin) cross-link involves residue Lys1749. Residues 1770-1798 (KKKRREPLGEDSVGLKPLKNASDGALMDD) are disordered. Phosphothreonine is present on Thr1851. ANK repeat units follow at residues 1917 to 1946 (TGET…DANI), 1950 to 1980 (MGRT…DLDA), 1984 to 2013 (DGTT…DVNA), 2017 to 2046 (LGKS…NKDM), and 2050 to 2079 (KEET…NRDI). Positions 1937–1945 (LLEASADAN) are HIF1AN-binding. Asn1945 bears the (3S)-3-hydroxyasparagine; by HIF1AN; partial mark. The interval 2004 to 2012 (LINSHADVN) is HIF1AN-binding. Asn2012 carries the (3S)-3-hydroxyasparagine; by HIF1AN; partial modification. 3 disordered regions span residues 2140-2185 (KSAT…DSSS), 2382-2428 (QPQN…SLPV), and 2440-2531 (PTSL…EAFK). The segment covering 2382–2395 (QPQNLQPPSQPHLS) has biased composition (low complexity). Residues 2440 to 2478 (PTSLPSSMVPPMTTTQFLTPPSQHSYSSSPVDNTPSHQL) are compositionally biased toward polar residues. Positions 2488-2503 (PSPESPDQWSSSSPHS) are enriched in low complexity. Over residues 2504-2524 (NISDWSEGISSPPTTMPSQIT) the composition is skewed to polar residues.

Belongs to the NOTCH family. In terms of assembly, heterodimer of a C-terminal fragment N(TM) and an N-terminal fragment N(EC) which are probably linked by disulfide bonds. Interacts with DNER, DTX1, DTX2 and RBPJ/RBPSUH. Also interacts with MAML1, MAML2 and MAML3 which act as transcriptional coactivators for NOTCH1. Notch 1 intracellular domain interacts with SNW1; the interaction involves multimerized NOTCH1 NICD and is implicated in a formation of an intermediate preactivation complex which associates with DNA-bound CBF-1/RBPJ. The activated membrane-bound form interacts with AAK1 which promotes NOTCH1 stabilization. Forms a trimeric complex with FBXW7 and SGK1. Interacts with HIF1AN. HIF1AN negatively regulates the function of notch intracellular domain (NICD), accelerating myogenic differentiation. Interacts (via NICD) with SNAI1 (via zinc fingers); the interaction induces SNAI1 degradation via MDM2-mediated ubiquitination and inhibits SNAI1-induced cell invasion. Interacts (via NICD) with MDM2A. Interacts (via NICD) with BCL6; the interaction decreases MAML1 recruitment by NOTCH1 NICD on target genes DNA and inhibits NOTCH1 transactivation activity. Interacts with THBS4. Interacts (via the EGF-like repeat region) with CCN3 (via CTCK domain). Interacts (via EGF-like domains) with DLL4 (via N-terminal DSL and MNNL domains). Interacts with ZMIZ1. Interacts (via NICD domain) with MEGF10 (via the cytoplasmic domain). Interacts with DLL1 and JAG1. Interacts (via NICD domain) with PRAG1. Forms a complex with PRAG1, N1ICD and MAML1, in a MAML1-dependent manner. Interacts (via transmembrane region) with PSEN1; the interaction is direct. Interacts with ZFP64. Synthesized in the endoplasmic reticulum as an inactive form which is proteolytically cleaved by a furin-like convertase in the trans-Golgi network before it reaches the plasma membrane to yield an active, ligand-accessible form. Cleavage results in a C-terminal fragment N(TM) and a N-terminal fragment N(EC). Following ligand binding, it is cleaved by ADAM17 to yield a membrane-associated intermediate fragment called notch extracellular truncation (NEXT). Following endocytosis, this fragment is then cleaved by one of the catalytic subunits of gamma-secretase (PSEN1 or PSEN2) to release a Notch-derived peptide containing the intracellular domain (NICD) from the membrane. Post-translationally, phosphorylated. In terms of processing, O-linked glycosylation by GALNT11 is involved in determination of left/right symmetry: glycosylation promotes activation of NOTCH1, possibly by promoting cleavage by ADAM17, modulating the balance between motile and immotile (sensory) cilia at the left-right organiser (LRO). O-glycosylated on the EGF-like domains. O-glucosylated at Ser-435 by KDELC1 and KDELC2. Contains both O-linked fucose and O-linked glucose in the EGF-like domains 11, 12 and 13, which are interacting with the residues on DLL4. O-glycosylation at Ser-1027 is only partial. MFNG-, RFNG- and LFNG-mediated modification of O-fucose residues at specific EGF-like domains results in inhibition of its activation by JAG1 and enhancement of its activation by DLL1 via an increased binding to DLL1. Ubiquitinated. Undergoes 'Lys-29'-linked polyubiquitination by ITCH; promotes the lysosomal degradation of non-activated internalized NOTCH1. Deubiquitination by USP12 is required for transport of internalized non-activated receptor from late endosomes to lysosomes for degradation. Monoubiquitination at Lys-1749 is required for activation by gamma-secretase cleavage, it promotes interaction with AAK1, which stabilizes it. Deubiquitination by EIF3F is necessary for nuclear import of activated Notch. Post-translationally, hydroxylated at Asn-1945 and Asn-2012 by HIF1AN. Hydroxylation reduces affinity for HI1AN and may thus indirectly modulate negative regulation of NICD. Highly expressed in the brain, lung and thymus. Expressed at lower levels in the spleen, bone-marrow, spinal cord, eyes, mammary gland, liver, intestine, skeletal muscle, kidney and heart. In the hair follicle, highly expressed exclusively in the epithelial compartment.

It localises to the cell membrane. Its subcellular location is the late endosome membrane. The protein resides in the nucleus. Functionally, functions as a receptor for membrane-bound ligands Jagged-1 (JAG1), Jagged-2 (JAG2) and Delta-1 (DLL1) to regulate cell-fate determination. Upon ligand activation through the released notch intracellular domain (NICD) it forms a transcriptional activator complex with RBPJ/RBPSUH and activates genes of the enhancer of split locus. Affects the implementation of differentiation, proliferation and apoptotic programs. Involved in angiogenesis; negatively regulates endothelial cell proliferation and migration and angiogenic sprouting. Involved in the maturation of both CD4(+) and CD8(+) cells in the thymus. Important for follicular differentiation and possibly cell fate selection within the follicle. During cerebellar development, functions as a receptor for neuronal DNER and is involved in the differentiation of Bergmann glia. Represses neuronal and myogenic differentiation. May play an essential role in postimplantation development, probably in some aspect of cell specification and/or differentiation. May be involved in mesoderm development, somite formation and neurogenesis. May enhance HIF1A function by sequestering HIF1AN away from HIF1A. Required for the THBS4 function in regulating protective astrogenesis from the subventricular zone (SVZ) niche after injury. Involved in determination of left/right symmetry by modulating the balance between motile and immotile (sensory) cilia at the left-right organiser (LRO). In Mus musculus (Mouse), this protein is Neurogenic locus notch homolog protein 1 (Notch1).